The following is a 348-amino-acid chain: tRNA N6-adenosine threonylcarbamoyltransferase (348 aa).

Positions 115 and 119 each coordinate Fe cation. Substrate-binding positions include 138–142, Asp-171, Gly-184, and Asn-276; that span reads LVSGG. Asp-304 is a Fe cation binding site.

The protein belongs to the KAE1 / TsaD family. Fe(2+) is required as a cofactor.

It localises to the cytoplasm. The catalysed reaction is L-threonylcarbamoyladenylate + adenosine(37) in tRNA = N(6)-L-threonylcarbamoyladenosine(37) in tRNA + AMP + H(+). Its function is as follows. Required for the formation of a threonylcarbamoyl group on adenosine at position 37 (t(6)A37) in tRNAs that read codons beginning with adenine. Is involved in the transfer of the threonylcarbamoyl moiety of threonylcarbamoyl-AMP (TC-AMP) to the N6 group of A37, together with TsaE and TsaB. TsaD likely plays a direct catalytic role in this reaction. This Xylella fastidiosa (strain M23) protein is tRNA N6-adenosine threonylcarbamoyltransferase.